A 503-amino-acid chain; its full sequence is Glutamyl-tRNA(Gln) amidotransferase subunit A (503 aa).

Catalysis depends on charge relay system residues K79 and S154. S178 (acyl-ester intermediate) is an active-site residue.

This sequence belongs to the amidase family. GatA subfamily. In terms of assembly, heterotrimer of A, B and C subunits.

The catalysed reaction is L-glutamyl-tRNA(Gln) + L-glutamine + ATP + H2O = L-glutaminyl-tRNA(Gln) + L-glutamate + ADP + phosphate + H(+). Its function is as follows. Allows the formation of correctly charged Gln-tRNA(Gln) through the transamidation of misacylated Glu-tRNA(Gln) in organisms which lack glutaminyl-tRNA synthetase. The reaction takes place in the presence of glutamine and ATP through an activated gamma-phospho-Glu-tRNA(Gln). The chain is Glutamyl-tRNA(Gln) amidotransferase subunit A from Agathobacter rectalis (strain ATCC 33656 / DSM 3377 / JCM 17463 / KCTC 5835 / VPI 0990) (Eubacterium rectale).